A 298-amino-acid chain; its full sequence is Protoheme IX farnesyltransferase (298 aa).

9 helical membrane-spanning segments follow: residues 26–46 (VVSL…PGAV), 52–72 (LLGT…NCLV), 93–113 (VSVP…LFIL), 120–140 (LTMW…TVIL), 148–168 (IVIG…AITG), 174–194 (ALLL…ALAL), 219–239 (LHVL…YLTQ), 241–261 (SGLI…YYAI), and 278–298 (YSII…YFYF).

This sequence belongs to the UbiA prenyltransferase family. Protoheme IX farnesyltransferase subfamily.

It is found in the cell inner membrane. It catalyses the reaction heme b + (2E,6E)-farnesyl diphosphate + H2O = Fe(II)-heme o + diphosphate. It functions in the pathway porphyrin-containing compound metabolism; heme O biosynthesis; heme O from protoheme: step 1/1. In terms of biological role, converts heme B (protoheme IX) to heme O by substitution of the vinyl group on carbon 2 of heme B porphyrin ring with a hydroxyethyl farnesyl side group. In Nitrosomonas eutropha (strain DSM 101675 / C91 / Nm57), this protein is Protoheme IX farnesyltransferase.